The primary structure comprises 135 residues: DNA-binding protein inhibitor ID-2-B (135 aa).

Residues 23 to 75 form the bHLH domain; the sequence is ARSKAPVDEPMSLLYNMNDCYSKLKELVPSIPPNKKVSKMEILQHVIDYILDL. Positions 108 to 117 match the Nuclear export signal motif; it reads LNTDISILSL.

In terms of assembly, heterodimer with other HLH proteins.

Its subcellular location is the cytoplasm. It localises to the nucleus. In terms of biological role, transcriptional regulator (lacking a basic DNA binding domain) which negatively regulates the basic helix-loop-helix (bHLH) transcription factors by forming heterodimers and inhibiting their DNA binding and transcriptional activity. Inhibits the activity of both neurogenic (neurod1/neuroD) and myogenic (myod1/myoD) bHLH factors. May play a role in the regulation of the circadian clock. In Xenopus laevis (African clawed frog), this protein is DNA-binding protein inhibitor ID-2-B (id2-b).